Here is an 842-residue protein sequence, read N- to C-terminus: Gamma-aminobutyric acid type B receptor subunit 2 (842 aa).

An N-terminal signal peptide occupies residues Met-1 to Gly-17. The Extracellular segment spans residues Tyr-18–Ser-438. N-linked (GlcNAc...) asparagine glycosylation is found at Asn-274, Asn-279, Asn-327, and Asn-366. Residues Ile-439 to Leu-459 form a helical membrane-spanning segment. Over Leu-460 to Asn-477 the chain is Cytoplasmic. Residues Leu-478–Leu-498 form a helical membrane-spanning segment. Over Asp-499–Asp-506 the chain is Extracellular. A helical membrane pass occupies residues Val-507–Phe-527. Over Gly-528 to Leu-556 the chain is Cytoplasmic. A helical membrane pass occupies residues Phe-557–Val-577. At Ser-578–Gly-610 the chain is on the extracellular side. N-linked (GlcNAc...) asparagine glycosylation is present at Asn-605. A helical transmembrane segment spans residues Val-611–Ala-631. At Trp-632–Tyr-647 the chain is on the cytoplasmic side. The chain crosses the membrane as a helical span at residues Ile-648–Ile-668. Residues Leu-669–Met-676 lie on the Extracellular side of the membrane. Residues Phe-677–Val-697 form a helical membrane-spanning segment. The Cytoplasmic portion of the chain corresponds to Pro-698 to Leu-842. The segment covering Ala-725–Ser-740 has biased composition (polar residues). Disordered stretches follow at residues Ala-725 to Ile-744 and Ser-791 to Leu-842.

This sequence belongs to the G-protein coupled receptor 3 family. In terms of assembly, may form a heterodimer with gbb-1. As to expression, expressed in cholinergic motor neurons.

It localises to the cell membrane. Its function is as follows. Component of a heterodimeric G-protein coupled receptor for GABA, formed by gbb-1 and gbb-2. Within the heterodimeric GABA receptor, only gbb-1 seems to bind agonists, while gbb-2 mediates coupling to G proteins. Ligand binding causes a conformation change that triggers signaling via guanine nucleotide-binding proteins (G proteins) and modulates the activity of down-stream effectors, such as adenylate cyclase. Signaling inhibits adenylate cyclase, stimulates phospholipase A2, activates potassium channels, inactivates voltage-dependent calcium-channels and modulates inositol phospholipid hydrolysis. Plays a critical role in the fine-tuning of inhibitory synaptic transmission. Pre-synaptic GABA receptor inhibits neurotransmitter release by down-regulating high-voltage activated calcium channels, whereas postsynaptic GABA receptor decreases neuronal excitability by activating a prominent inwardly rectifying potassium (Kir) conductance that underlies the late inhibitory postsynaptic potentials. Along with gbb-1, may couple to the G(o)-alpha G-protein goa-1 to negatively regulate cholinergic receptor activity in the presence of high levels of acetylcholine in ventral cord motor neurons. As acetylcholine depolarizes body wall muscles, modulation of acetylcholine levels most likely results in the control of locomotory behavior. Regulates locomotory behavior in response to GABA release by GABAergic motor neurons. The sequence is that of Gamma-aminobutyric acid type B receptor subunit 2 from Caenorhabditis elegans.